We begin with the raw amino-acid sequence, 147 residues long: ATP synthase epsilon chain 2 (147 aa).

This sequence belongs to the ATPase epsilon chain family. In terms of assembly, F-type ATPases have 2 components, CF(1) - the catalytic core - and CF(0) - the membrane proton channel. CF(1) has five subunits: alpha(3), beta(3), gamma(1), delta(1), epsilon(1). CF(0) has three main subunits: a, b and c.

Its subcellular location is the cell inner membrane. In terms of biological role, produces ATP from ADP in the presence of a proton gradient across the membrane. In Photobacterium profundum (strain SS9), this protein is ATP synthase epsilon chain 2.